Reading from the N-terminus, the 202-residue chain is Imidazole glycerol phosphate synthase subunit HisH (202 aa).

The 200-residue stretch at 3–202 folds into the Glutamine amidotransferase type-1 domain; that stretch reads RIVIIDYGLG…KILRNFVEMC (200 aa). The active-site Nucleophile is the C79. Residues H183 and E185 contribute to the active site.

As to quaternary structure, heterodimer of HisH and HisF.

Its subcellular location is the cytoplasm. The enzyme catalyses 5-[(5-phospho-1-deoxy-D-ribulos-1-ylimino)methylamino]-1-(5-phospho-beta-D-ribosyl)imidazole-4-carboxamide + L-glutamine = D-erythro-1-(imidazol-4-yl)glycerol 3-phosphate + 5-amino-1-(5-phospho-beta-D-ribosyl)imidazole-4-carboxamide + L-glutamate + H(+). It carries out the reaction L-glutamine + H2O = L-glutamate + NH4(+). The protein operates within amino-acid biosynthesis; L-histidine biosynthesis; L-histidine from 5-phospho-alpha-D-ribose 1-diphosphate: step 5/9. IGPS catalyzes the conversion of PRFAR and glutamine to IGP, AICAR and glutamate. The HisH subunit catalyzes the hydrolysis of glutamine to glutamate and ammonia as part of the synthesis of IGP and AICAR. The resulting ammonia molecule is channeled to the active site of HisF. This is Imidazole glycerol phosphate synthase subunit HisH from Methanosarcina mazei (strain ATCC BAA-159 / DSM 3647 / Goe1 / Go1 / JCM 11833 / OCM 88) (Methanosarcina frisia).